Here is a 264-residue protein sequence, read N- to C-terminus: Thymidylate synthase (264 aa).

R21 serves as a coordination point for dUMP. A (6R)-5,10-methylene-5,6,7,8-tetrahydrofolate-binding site is contributed by H51. 126–127 is a dUMP binding site; it reads RR. C146 (nucleophile) is an active-site residue. DUMP-binding positions include 166–169, N177, and 207–209; these read RSAD and HLY. D169 is a (6R)-5,10-methylene-5,6,7,8-tetrahydrofolate binding site. A263 serves as a coordination point for (6R)-5,10-methylene-5,6,7,8-tetrahydrofolate.

Belongs to the thymidylate synthase family. Bacterial-type ThyA subfamily. As to quaternary structure, homodimer.

It localises to the cytoplasm. It carries out the reaction dUMP + (6R)-5,10-methylene-5,6,7,8-tetrahydrofolate = 7,8-dihydrofolate + dTMP. It participates in pyrimidine metabolism; dTTP biosynthesis. Catalyzes the reductive methylation of 2'-deoxyuridine-5'-monophosphate (dUMP) to 2'-deoxythymidine-5'-monophosphate (dTMP) while utilizing 5,10-methylenetetrahydrofolate (mTHF) as the methyl donor and reductant in the reaction, yielding dihydrofolate (DHF) as a by-product. This enzymatic reaction provides an intracellular de novo source of dTMP, an essential precursor for DNA biosynthesis. This is Thymidylate synthase from Hahella chejuensis (strain KCTC 2396).